The following is a 300-amino-acid chain: F-box/LRR-repeat protein 15 (300 aa).

The residue at position 1 (methionine 1) is an N-acetylmethionine. The region spanning 19–66 (LLDLPWEDVLLPHILSRVPLRQLLRLQRVSRAFRALVQLHLAGLRRFD) is the F-box domain. Residues 113 to 269 (NPQLRSVALA…EPSLSRLRKR (157 aa)) are interaction with SMURF1. LRR repeat units follow at residues 141–162 (RLQR…RGLA), 167–188 (ALEE…VYLA), 194–215 (GLRS…QELA), 220–241 (ELEH…RTLA), and 246–267 (ALRS…SRLR).

Belongs to the FBXL15 family. As to quaternary structure, part of the SCF (SKP1-CUL1-F-box) E3 ubiquitin-protein ligase complex SCF(FBXL15) composed of CUL1, SKP1, RBX1 and FBXL15.

It localises to the cytoplasm. It participates in protein modification; protein ubiquitination. Substrate recognition component of a SCF (SKP1-CUL1-F-box protein) E3 ubiquitin-protein ligase complex which mediates the ubiquitination and subsequent proteasomal degradation of SMURF1, thereby acting as a positive regulator of the BMP signaling pathway. Required for dorsal/ventral pattern formation and bone mass maintenance. Also mediates ubiquitination of SMURF2 and WWP2. The protein is F-box/LRR-repeat protein 15 (FBXL15) of Canis lupus familiaris (Dog).